The chain runs to 300 residues: Delta(7)-sterol 5(6)-desaturase erg31 (300 aa).

3 helical membrane-spanning segments follow: residues 33–53 (ISLF…FASL), 78–98 (VLTA…WFLA), and 117–137 (YFLC…YWAH). Residues 123–248 (PLFVMFSDFG…FTTLFDRLGN (126 aa)) enclose the Fatty acid hydroxylase domain. The Histidine box-1 motif lies at 137–141 (HRFLH). Positions 150–154 (HKLHH) match the Histidine box-2 motif. A helical membrane pass occupies residues 180-200 (HLFPFFFPLHKLTYLALFTFV). Residues 225–229 (HNGHH) carry the Histidine box-3 motif.

The protein belongs to the sterol desaturase family. It depends on Fe cation as a cofactor.

It localises to the endoplasmic reticulum membrane. It carries out the reaction episterol + 2 Fe(II)-[cytochrome b5] + O2 + 2 H(+) = 5-dehydroepisterol + 2 Fe(III)-[cytochrome b5] + 2 H2O. Its pathway is steroid metabolism; ergosterol biosynthesis. Functionally, C-5 sterol desaturase; part of the third module of ergosterol biosynthesis pathway that includes by the late steps of the pathway. Erg31 and erg32 catalyze the introduction of a C-5 double bond in the B ring to produce 5-dehydroepisterol. The third module or late pathway involves the ergosterol synthesis itself through consecutive reactions that mainly occur in the endoplasmic reticulum (ER) membrane. Firstly, the squalene synthase erg9 catalyzes the condensation of 2 farnesyl pyrophosphate moieties to form squalene, which is the precursor of all steroids. Secondly, squalene is converted into lanosterol by the consecutive action of the squalene epoxidase erg1 and the lanosterol synthase erg7. The lanosterol 14-alpha-demethylase erg11/cyp1 catalyzes C14-demethylation of lanosterol to produce 4,4'-dimethyl cholesta-8,14,24-triene-3-beta-ol. In the next steps, a complex process involving various demethylation, reduction and desaturation reactions catalyzed by the C-14 reductase erg24 and the C-4 demethylation complex erg25-erg26-erg27 leads to the production of zymosterol. Erg28 likely functions in the C-4 demethylation complex reaction by tethering erg26 and Erg27 to the endoplasmic reticulum or to facilitate interaction between these proteins. Then, the sterol 24-C-methyltransferase erg6 catalyzes the methyl transfer from S-adenosyl-methionine to the C-24 of zymosterol to form fecosterol. The C-8 sterol isomerase erg2 catalyzes the reaction which results in unsaturation at C-7 in the B ring of sterols and thus converts fecosterol to episterol. The sterol-C5-desaturases erg31 and erg32 then catalyze the introduction of a C-5 double bond in the B ring to produce 5-dehydroepisterol. The C-22 sterol desaturase erg5 further converts 5-dehydroepisterol into ergosta-5,7,22,24(28)-tetraen-3beta-ol by forming the C-22(23) double bond in the sterol side chain. Finally, ergosta-5,7,22,24(28)-tetraen-3beta-ol is substrate of the C-24(28) sterol reductase erg4 to produce ergosterol. In the genus Schizosaccharomyces, a second route exists between lanosterol and fecosterol, via the methylation of lanosterol to eburicol by erg6, followed by C14-demethylation by erg11/cyp1 and C4-demethylation by the demethylation complex erg25-erg26-erg27. The protein is Delta(7)-sterol 5(6)-desaturase erg31 of Schizosaccharomyces pombe (strain 972 / ATCC 24843) (Fission yeast).